We begin with the raw amino-acid sequence, 436 residues long: MTKPTIAIVGRANVGKSTIFNRIVGERVSIVEDTPGVTRDRIYSSGEWLTHEFNIIDTGGIELGDEPFQEQIRAQAEIAIEEADVIIFMVNGRDGITNEDDFVAKLLFKSSKPVVLGVNKIDNPEMRADIYEFYSLGFGEPFPISGSHGLGIGDLLDEAAKHFPEQQEEDYDDDVIKFSLIGRPNVGKSSLINAILGEERVIVSPVAGTTRDAIDTVYTFENQEYVMIDTAGMRKKGKVYEATERYSVLRALKAIERSNVVLVVIDAEEGIIEQDKKIAGYAHEAGKAIVIVVNKWDTVEKDSKTMKKFEDKVRENFQFLDYAPIAFVSAKERKRLNTLFPLINMAGENHRKRVQSSTLNEVITDAVAMNPTPTHKGSRLNIFYTTQVAIEPPTFVFFVNDVEMMHFSYQRFLENRIRAAFGFEGTPLHLIARKRN.

EngA-type G domains are found at residues 4 to 167 (PTIA…PEQQ) and 176 to 351 (IKFS…ENHR). Residues 10-17 (GRANVGKS), 57-61 (DTGGI), 119-122 (NKID), 182-189 (GRPNVGKS), 229-233 (DTAGM), and 294-297 (NKWD) each bind GTP. Residues 352–436 (KRVQSSTLNE…PLHLIARKRN (85 aa)) form the KH-like domain.

This sequence belongs to the TRAFAC class TrmE-Era-EngA-EngB-Septin-like GTPase superfamily. EngA (Der) GTPase family. In terms of assembly, associates with the 50S ribosomal subunit.

Its function is as follows. GTPase that plays an essential role in the late steps of ribosome biogenesis. The chain is GTPase Der from Macrococcus caseolyticus (strain JCSC5402) (Macrococcoides caseolyticum).